A 478-amino-acid chain; its full sequence is Zinc metalloproteinase/disintegrin (478 aa).

Residues 1–20 (MIEVLLVTICLAVFPYPGSS) form the signal peptide. Residues 21 to 190 (IILESGNVDD…KASQLYLTPE (170 aa)) constitute a propeptide that is removed on maturation. Glutamine 191 bears the Pyrrolidone carboxylic acid mark. In terms of domain architecture, Peptidase M12B spans 197–392 (RYIELAIVVD…SKPQCIINAP (196 aa)). Ca(2+) is bound by residues glutamate 200 and aspartate 284. Intrachain disulfides connect cysteine 308-cysteine 387, cysteine 349-cysteine 371, and cysteine 351-cysteine 354. Histidine 333 provides a ligand contact to Zn(2+). The active site involves glutamate 334. 2 residues coordinate Zn(2+): histidine 337 and histidine 343. Cysteine 387 and asparagine 390 together coordinate Ca(2+). Residues 393-410 (LRTDTVSTPVSGNEFLEA) constitute a propeptide that is removed on maturation. One can recognise a Disintegrin domain in the interval 400-478 (TPVSGNEFLE…GQSADCPRNS (79 aa)). 6 cysteine pairs are disulfide-bonded: cysteine 414-cysteine 429, cysteine 416-cysteine 424, cysteine 423-cysteine 446, cysteine 437-cysteine 443, cysteine 442-cysteine 467, and cysteine 455-cysteine 474. A Cell attachment site motif is present at residues 459–461 (RGD). Residues 459–478 (RGDNPDDRCTGQSADCPRNS) are disordered. A compositionally biased stretch (polar residues) spans 468–478 (TGQSADCPRNS).

It belongs to the venom metalloproteinase (M12B) family. P-II subfamily. P-IIa sub-subfamily. In terms of assembly, monomer. Requires Zn(2+) as cofactor. In terms of processing, not N-glycosylated. Expressed by the venom gland.

The protein localises to the secreted. It catalyses the reaction Cleavage of 3-Asn-|-Gln-4, 10-His-|-Leu-11 and 14-Ala-|-Leu-15 in the insulin B chain, and the bond Z-Gly-Pro-|-Leu-Gly-Pro in a small molecule substrate of microbial collagenase.. Zinc protease that induces hemorrhage. Functionally, inhibits platelet aggregation induced by ADP, thrombin, and collagen. Acts by inhibiting fibrinogen interaction with platelet receptors GPIIb/GPIIIa (ITGA2B/ITGB3). The polypeptide is Zinc metalloproteinase/disintegrin (Protobothrops flavoviridis (Habu)).